Reading from the N-terminus, the 142-residue chain is ATP synthase epsilon chain (142 aa).

It belongs to the ATPase epsilon chain family. F-type ATPases have 2 components, CF(1) - the catalytic core - and CF(0) - the membrane proton channel. CF(1) has five subunits: alpha(3), beta(3), gamma(1), delta(1), epsilon(1). CF(0) has three main subunits: a, b and c.

Its subcellular location is the cell inner membrane. Produces ATP from ADP in the presence of a proton gradient across the membrane. In Shewanella denitrificans (strain OS217 / ATCC BAA-1090 / DSM 15013), this protein is ATP synthase epsilon chain.